A 316-amino-acid polypeptide reads, in one-letter code: Pantothenate kinase (316 aa).

Position 95 to 102 (95 to 102 (GSVAVGKS)) interacts with ATP.

This sequence belongs to the prokaryotic pantothenate kinase family.

The protein resides in the cytoplasm. The catalysed reaction is (R)-pantothenate + ATP = (R)-4'-phosphopantothenate + ADP + H(+). It functions in the pathway cofactor biosynthesis; coenzyme A biosynthesis; CoA from (R)-pantothenate: step 1/5. The protein is Pantothenate kinase of Erwinia tasmaniensis (strain DSM 17950 / CFBP 7177 / CIP 109463 / NCPPB 4357 / Et1/99).